Reading from the N-terminus, the 111-residue chain is Flagellar hook-basal body complex protein FliE (111 aa).

This sequence belongs to the FliE family.

Its subcellular location is the bacterial flagellum basal body. This is Flagellar hook-basal body complex protein FliE from Clostridium acetobutylicum (strain ATCC 824 / DSM 792 / JCM 1419 / IAM 19013 / LMG 5710 / NBRC 13948 / NRRL B-527 / VKM B-1787 / 2291 / W).